The primary structure comprises 347 residues: 3-isopropylmalate dehydrogenase (347 aa).

76–87 (GPKWTDPNNRPE) serves as a coordination point for NAD(+). Substrate contacts are provided by R94, R104, R132, and D217. 3 residues coordinate Mg(2+): D217, D241, and D245. An NAD(+)-binding site is contributed by 275–287 (GSAPDIANEDKAN).

This sequence belongs to the isocitrate and isopropylmalate dehydrogenases family. LeuB type 1 subfamily. In terms of assembly, homodimer. It depends on Mg(2+) as a cofactor. Mn(2+) serves as cofactor.

It localises to the cytoplasm. It carries out the reaction (2R,3S)-3-isopropylmalate + NAD(+) = 4-methyl-2-oxopentanoate + CO2 + NADH. Its pathway is amino-acid biosynthesis; L-leucine biosynthesis; L-leucine from 3-methyl-2-oxobutanoate: step 3/4. In terms of biological role, catalyzes the oxidation of 3-carboxy-2-hydroxy-4-methylpentanoate (3-isopropylmalate) to 3-carboxy-4-methyl-2-oxopentanoate. The product decarboxylates to 4-methyl-2 oxopentanoate. This Staphylococcus epidermidis (strain ATCC 12228 / FDA PCI 1200) protein is 3-isopropylmalate dehydrogenase.